A 1271-amino-acid chain; its full sequence is Zinc finger transcription factor Trps1 (1271 aa).

2 disordered regions span residues 1-76 and 124-155; these read MVRK…DSAS and SPIKSEADDTQELASSASVDSLEAKEENDMSP. Residues 34 to 49 show a composition bias toward polar residues; sequence SKEISTDPMQENSEQS. Residues 54 to 65 show a composition bias toward basic and acidic residues; it reads HNSDDHSFHDQE. Residues 66 to 76 are compositionally biased toward polar residues; the sequence is PSSSINKDSAS. The C2H2-type 1; atypical zinc-finger motif lies at 217-242; it reads FKCNICGYGYYGNDPTDLIKHFRKYH. The C2H2-type 2; atypical zinc-finger motif lies at 328–353; that stretch reads FRCKFCNFTYLAKSATELEQHFLKTH. The segment at 353–387 is disordered; it reads HPNKMKMSSDSGKPSEKSTNKSSPIPRSCEPGDLG. A C2H2-type 3; atypical zinc finger spans residues 426 to 451; sequence YWCKFCSFSCESSSNSKLLEHHSKQH. A C2H2-type 4; atypical zinc finger spans residues 513–543; it reads YNCQFCDFRYSKSHGPEVILVGPLLRHYQQH. C2H2-type zinc fingers lie at residues 604–627, 656–679, and 682–705; these read HQCDQCSFSSPDVDVLLLHYENAH, HSCTKCDFIVQVEEDLPRHYRRVH, and YKCRQCNFTAADTQSLLDHFNSAH. A disordered region spans residues 843–877; the sequence is GVTAGASGEKSGQHTPQYPTAGDSKSKDESQSLLR. The segment at 886-910 adopts a GATA-type zinc-finger fold; that stretch reads CANCLTTKTSLWRKNANGGYVCNAC. Disordered stretches follow at residues 938–987, 1031–1064, and 1154–1196; these read RTRK…RENQ, SPQESSGEPGNSSSVSDGKGSSERGSPIEKYMRP, and LDLA…EKSD. Positions 972–985 are enriched in basic and acidic residues; that stretch reads IRSEDHSMEGHQRE. Over residues 1031–1049 the composition is skewed to low complexity; that stretch reads SPQESSGEPGNSSSVSDGK. Basic and acidic residues-rich tracts occupy residues 1050 to 1062 and 1170 to 1196; these read GSSERGSPIEKYM and DSKEKSKSPVSVKDDGPLNVTKIEKSD. Residues 1153–1271 form a transcriptional repressor domain region; sequence PLDLAMKHSR…QAEKNGKNKD (119 aa). Glycyl lysine isopeptide (Lys-Gly) (interchain with G-Cter in SUMO) cross-links involve residues lysine 1182 and lysine 1191. 2 consecutive C2H2-type zinc fingers follow at residues 1205 to 1227 and 1233 to 1257; these read TKCVHCGIVFLDEVMYALHMSCH and FQCSICQHLCTDKYDFTTHIQRGLH.

As to quaternary structure, binds specifically to GATA sequences. Post-translationally, sumoylated. Sumoylation in the repressor domain inhibits the transcription repression activity. Sumoylation on Lys-1191 is the major site. Appears to be sumoylated on multiple sites.

It localises to the nucleus. Functionally, transcriptional repressor. Represses expression of GATA-regulated genes at selected sites and stages in vertebrate development. The protein is Zinc finger transcription factor Trps1 (trps1) of Xenopus laevis (African clawed frog).